Consider the following 1085-residue polypeptide: DNA mismatch repair protein MutS (1085 aa).

The interval 533-564 (DEDLFGEEEQNAPPVGSSNHAVGTQPSADDEA) is disordered. Residues 548 to 559 (GSSNHAVGTQPS) are compositionally biased toward polar residues. Residue 812–819 (GPNMSGKS) coordinates ATP. The interval 997–1042 (ERRAPRSAPPTVPARGDDRRSAGRASSSGAGAARGEQGRTLPDGQL) is disordered. Residues 1019–1031 (GRASSSGAGAARG) are compositionally biased toward low complexity.

It belongs to the DNA mismatch repair MutS family.

Functionally, this protein is involved in the repair of mismatches in DNA. It is possible that it carries out the mismatch recognition step. This protein has a weak ATPase activity. The sequence is that of DNA mismatch repair protein MutS from Roseiflexus sp. (strain RS-1).